Reading from the N-terminus, the 276-residue chain is MESKSEQNEWSSGVWAHLTAVRQQSPLVQCITNFVSMDLVANTLLSAGASPAMVHSVVEIPDFTPHIHALCVNVGTLTPDWLPSMKAAAELASQLRKPWVLDPAAVSCSGFRLKACLELIELKPTVIKGNGSEIIALSSASRGQTKGADSSHESTDAIEAAKSLAMSSGAVVAVSGAVDIVTDGKQVIGVHNGTKMMQQITATGCSLAGLIVAFLAIDSSRVLEATVSAMAVFGIAGELGEAMANGPASLRMHLIDCLYGLDETTVLKRVNVTRLG.

Residues methionine 53 and alanine 202 each contribute to the substrate site.

Belongs to the Thz kinase family. Mg(2+) serves as cofactor.

The catalysed reaction is 5-(2-hydroxyethyl)-4-methylthiazole + ATP = 4-methyl-5-(2-phosphooxyethyl)-thiazole + ADP + H(+). The protein operates within cofactor biosynthesis; thiamine diphosphate biosynthesis; 4-methyl-5-(2-phosphoethyl)-thiazole from 5-(2-hydroxyethyl)-4-methylthiazole: step 1/1. Functionally, thiazole kinase involved in thiamine salvage pathway. The protein is Hydroxyethylthiazole kinase (THIM) of Arabidopsis thaliana (Mouse-ear cress).